The sequence spans 95 residues: Cell division topological specificity factor (95 aa).

Belongs to the MinE family.

Its function is as follows. Prevents the cell division inhibition by proteins MinC and MinD at internal division sites while permitting inhibition at polar sites. This ensures cell division at the proper site by restricting the formation of a division septum at the midpoint of the long axis of the cell. The chain is Cell division topological specificity factor from Synechococcus sp. (strain CC9902).